The primary structure comprises 407 residues: Imidazolonepropionase (407 aa).

Residues histidine 68 and histidine 70 each coordinate Fe(3+). 2 residues coordinate Zn(2+): histidine 68 and histidine 70. 3 residues coordinate 4-imidazolone-5-propanoate: arginine 77, tyrosine 140, and histidine 173. Tyrosine 140 contributes to the N-formimidoyl-L-glutamate binding site. Histidine 238 is a binding site for Fe(3+). Residue histidine 238 participates in Zn(2+) binding. Glutamine 241 contacts 4-imidazolone-5-propanoate. Aspartate 313 is a Fe(3+) binding site. Residue aspartate 313 participates in Zn(2+) binding. Asparagine 315 and glycine 317 together coordinate N-formimidoyl-L-glutamate. 4-imidazolone-5-propanoate is bound at residue threonine 318.

Belongs to the metallo-dependent hydrolases superfamily. HutI family. The cofactor is Zn(2+). Fe(3+) serves as cofactor.

The protein localises to the cytoplasm. The catalysed reaction is 4-imidazolone-5-propanoate + H2O = N-formimidoyl-L-glutamate. It participates in amino-acid degradation; L-histidine degradation into L-glutamate; N-formimidoyl-L-glutamate from L-histidine: step 3/3. Catalyzes the hydrolytic cleavage of the carbon-nitrogen bond in imidazolone-5-propanoate to yield N-formimidoyl-L-glutamate. It is the third step in the universal histidine degradation pathway. In Burkholderia pseudomallei (strain 1710b), this protein is Imidazolonepropionase.